A 300-amino-acid chain; its full sequence is Protein SPEAR2 (300 aa).

The span at 1–11 (MCSNNNTSSGS) shows a compositional bias: polar residues. Residues 1-64 (MCSNNNTSSG…PPLSSSPSLP (64 aa)) form a disordered region. Residues 25-38 (CRKKQKKDKVRRRG) show a composition bias toward basic residues. Residues 37-45 (RGPGVAELE) carry the SPL motif. Positions 43-54 (ELEKIRLQEEYK) are enriched in basic and acidic residues. The span at 55–64 (PPLSSSPSLP) shows a compositional bias: low complexity. The EAR motif lies at 294–300 (IDLNLKL).

Homodimer and heterodimer with SPL and SPEARs. Interacts with SPL, SPEAR1, SPEAR3 and SPEAR4. As to expression, expressed in leaves.

Functionally, adapter-like transcriptional repressor recruiting TPL/TPR corepressors to inhibit TCP transcription factors. May be involved in leaf development. In Arabidopsis thaliana (Mouse-ear cress), this protein is Protein SPEAR2.